The following is a 708-amino-acid chain: Lactotransferrin (708 aa).

Positions 1–19 are cleaved as a signal peptide; sequence MKLFFPALLSLGALGLCLA. Transferrin-like domains lie at 25–352 and 364–693; these read VRWC…GLRE and VVWC…KLRR. Cystine bridges form between Cys-28-Cys-64 and Cys-38-Cys-55. Residues 44–51 are interaction with E.coli ompC; the sequence is RMKKVRGP. Asp-79 contributes to the Fe(3+) binding site. Residue Lys-92 is part of the active site. Tyr-111 is a binding site for Fe(3+). Disulfide bonds link Cys-134–Cys-217, Cys-176–Cys-192, Cys-179–Cys-202, Cys-189–Cys-200, and Cys-250–Cys-264. Hydrogencarbonate is bound by residues Thr-136, Arg-140, Ala-142, and Gly-143. Tyr-211 is a Fe(3+) binding site. N-linked (GlcNAc...) asparagine glycosylation occurs at Asn-252. His-272 is a binding site for Fe(3+). Catalysis depends on Ser-278, which acts as the Nucleophile. 2 disulfides stabilise this stretch: Cys-367–Cys-399 and Cys-377–Cys-390. Residue Asn-385 is glycosylated (N-linked (GlcNAc...) asparagine). The Fe(3+) site is built by Asp-414 and Tyr-452. 8 disulfides stabilise this stretch: Cys-424–Cys-703, Cys-444–Cys-666, Cys-476–Cys-551, Cys-500–Cys-694, Cys-510–Cys-524, Cys-521–Cys-534, Cys-592–Cys-606, and Cys-644–Cys-649. Hydrogencarbonate contacts are provided by Thr-478, Arg-482, Ala-484, and Gly-485. The N-linked (GlcNAc...) asparagine glycan is linked to Asn-537. Residue Tyr-545 participates in Fe(3+) binding. An N-linked (GlcNAc...) asparagine glycan is attached at Asn-594. Position 614 (His-614) interacts with Fe(3+).

Belongs to the transferrin family. As to quaternary structure, monomer. Found in a complex with LTF, CLU, EPPIN and SEMG1. Interacts with E.coli outer membrane protein C (OmpC). Found in a complex with MPO and LTF; interacts directly with CP, allows Fe(3+) incorporation into LTF and activation of CP ferroxidase activity. Post-translationally, poly-N-acetyllactosaminic carbohydrate moiety seems to be needed for TLR4 activation.

The protein localises to the secreted. It is found in the cytoplasmic granule. In terms of biological role, transferrins are iron binding transport proteins which can bind two Fe(3+) ions in association with the binding of an anion, usually bicarbonate. Major iron-binding and multifunctional protein found in exocrine fluids such as breast milk and mucosal secretions. Has antimicrobial activity, which depends on the extracellular cation concentration. Antimicrobial properties include bacteriostasis, which is related to its ability to sequester free iron and thus inhibit microbial growth, as well as direct bactericidal properties leading to the release of lipopolysaccharides from the bacterial outer membrane. Can also prevent bacterial biofilm development in P.aeruginosa infection. Has weak antifungal activity against C.albicans. Has anabolic, differentiating and anti-apoptotic effects on osteoblasts and can also inhibit osteoclastogenesis, possibly playing a role in the regulation of bone growth. Promotes binding of species C adenoviruses to epithelial cells, promoting adenovirus infection. Can inhibit papillomavirus infections. Stimulates the TLR4 signaling pathway leading to NF-kappa-B activation and subsequent pro-inflammatory cytokine production while also interfering with the lipopolysaccharide (LPS)-stimulated TLR4 signaling. Inhibits neutrophil granulocyte migration to sites of apoptosis, when secreted by apoptotic cells. Stimulates VEGFA-mediated endothelial cell migration and proliferation. Binds heparin, chondroitin sulfate and possibly other glycosaminoglycans (GAGs). Also binds specifically to pneumococcal surface protein A (PspA), the lipid A portion of bacterial lipopolysaccharide (LPS), lysozyme and DNA. Functionally, lactoferricin binds to the bacterial surface and is crucial for the bactericidal functions. Has some antiviral activity against papillomavirus infection. N-terminal region shows strong antifungal activity against C.albicans. Contains two BBXB heparin-binding consensus sequences that appear to form the predominate functional GAG-binding site. Its function is as follows. The lactotransferrin transferrin-like domain 1 functions as a serine protease of the peptidase S60 family that cuts arginine rich regions. This function contributes to the antimicrobial activity. Shows a preferential cleavage at -Arg-Ser-Arg-Arg-|- and -Arg-Arg-Ser-Arg-|-, and of Z-Phe-Arg-|-aminomethylcoumarin sites. The polypeptide is Lactotransferrin (LTF) (Camelus dromedarius (Dromedary)).